Consider the following 241-residue polypeptide: Pyridoxine 5'-phosphate synthase (241 aa).

N7 lines the 3-amino-2-oxopropyl phosphate pocket. 9 to 10 (DH) lines the 1-deoxy-D-xylulose 5-phosphate pocket. R18 contributes to the 3-amino-2-oxopropyl phosphate binding site. The active-site Proton acceptor is H43. 2 residues coordinate 1-deoxy-D-xylulose 5-phosphate: R45 and H50. Residue E70 is the Proton acceptor of the active site. T100 lines the 1-deoxy-D-xylulose 5-phosphate pocket. The active-site Proton donor is the H191. Residues G192 and 213 to 214 (GH) contribute to the 3-amino-2-oxopropyl phosphate site.

It belongs to the PNP synthase family. Homooctamer; tetramer of dimers.

It localises to the cytoplasm. It carries out the reaction 3-amino-2-oxopropyl phosphate + 1-deoxy-D-xylulose 5-phosphate = pyridoxine 5'-phosphate + phosphate + 2 H2O + H(+). Its pathway is cofactor biosynthesis; pyridoxine 5'-phosphate biosynthesis; pyridoxine 5'-phosphate from D-erythrose 4-phosphate: step 5/5. In terms of biological role, catalyzes the complicated ring closure reaction between the two acyclic compounds 1-deoxy-D-xylulose-5-phosphate (DXP) and 3-amino-2-oxopropyl phosphate (1-amino-acetone-3-phosphate or AAP) to form pyridoxine 5'-phosphate (PNP) and inorganic phosphate. This chain is Pyridoxine 5'-phosphate synthase, found in Nostoc punctiforme (strain ATCC 29133 / PCC 73102).